The primary structure comprises 474 residues: Glutamate--tRNA ligase (474 aa).

The 'HIGH' region motif lies at 9 to 19 (PSPTGFLHVGG). A 'KMSKS' region motif is present at residues 240–244 (KLSKR). ATP is bound at residue lysine 243.

It belongs to the class-I aminoacyl-tRNA synthetase family. Glutamate--tRNA ligase type 1 subfamily. In terms of assembly, monomer.

The protein resides in the cytoplasm. The catalysed reaction is tRNA(Glu) + L-glutamate + ATP = L-glutamyl-tRNA(Glu) + AMP + diphosphate. Functionally, catalyzes the attachment of glutamate to tRNA(Glu) in a two-step reaction: glutamate is first activated by ATP to form Glu-AMP and then transferred to the acceptor end of tRNA(Glu). The sequence is that of Glutamate--tRNA ligase from Photobacterium profundum (strain SS9).